The following is a 91-amino-acid chain: Small ribosomal subunit protein bS16 (91 aa).

This sequence belongs to the bacterial ribosomal protein bS16 family.

In Lacticaseibacillus casei (strain BL23) (Lactobacillus casei), this protein is Small ribosomal subunit protein bS16.